The sequence spans 244 residues: Orotidine 5'-phosphate decarboxylase (244 aa).

Residues Asp18, Lys43, 73–82 (DLKLADIGYI), Ser130, 182–192 (PGVGAQGGKPG), Gly206, and Arg207 contribute to the substrate site. Lys75 (proton donor) is an active-site residue.

Belongs to the OMP decarboxylase family. Type 1 subfamily. Homodimer.

The enzyme catalyses orotidine 5'-phosphate + H(+) = UMP + CO2. Its pathway is pyrimidine metabolism; UMP biosynthesis via de novo pathway; UMP from orotate: step 2/2. Catalyzes the decarboxylation of orotidine 5'-monophosphate (OMP) to uridine 5'-monophosphate (UMP). This is Orotidine 5'-phosphate decarboxylase from Aeropyrum pernix (strain ATCC 700893 / DSM 11879 / JCM 9820 / NBRC 100138 / K1).